The chain runs to 137 residues: Ribonuclease P protein component (137 aa).

The protein belongs to the RnpA family. Consists of a catalytic RNA component (M1 or rnpB) and a protein subunit.

The catalysed reaction is Endonucleolytic cleavage of RNA, removing 5'-extranucleotides from tRNA precursor.. Its function is as follows. RNaseP catalyzes the removal of the 5'-leader sequence from pre-tRNA to produce the mature 5'-terminus. It can also cleave other RNA substrates such as 4.5S RNA. The protein component plays an auxiliary but essential role in vivo by binding to the 5'-leader sequence and broadening the substrate specificity of the ribozyme. This is Ribonuclease P protein component from Porphyromonas gingivalis (strain ATCC 33277 / DSM 20709 / CIP 103683 / JCM 12257 / NCTC 11834 / 2561).